The chain runs to 431 residues: Enolase (431 aa).

Residue Gln-164 coordinates (2R)-2-phosphoglycerate. Glu-206 functions as the Proton donor in the catalytic mechanism. Residues Asp-243, Glu-286, and Asp-313 each contribute to the Mg(2+) site. (2R)-2-phosphoglycerate-binding residues include Lys-338, Arg-367, Ser-368, and Lys-389. Catalysis depends on Lys-338, which acts as the Proton acceptor.

The protein belongs to the enolase family. Mg(2+) is required as a cofactor.

The protein localises to the cytoplasm. The protein resides in the secreted. It is found in the cell surface. The enzyme catalyses (2R)-2-phosphoglycerate = phosphoenolpyruvate + H2O. Its pathway is carbohydrate degradation; glycolysis; pyruvate from D-glyceraldehyde 3-phosphate: step 4/5. Functionally, catalyzes the reversible conversion of 2-phosphoglycerate (2-PG) into phosphoenolpyruvate (PEP). It is essential for the degradation of carbohydrates via glycolysis. This is Enolase from Chloroflexus aggregans (strain MD-66 / DSM 9485).